The sequence spans 622 residues: Carbon monoxide dehydrogenase (622 aa).

Positions 40, 49, 52, 57, and 68 each coordinate [4Fe-4S] cluster. Histidine 256, cysteine 334, cysteine 442, cysteine 473, and cysteine 514 together coordinate [Ni-4Fe-5S] cluster.

The protein belongs to the Ni-containing carbon monoxide dehydrogenase family. As to quaternary structure, homodimer. The cofactor is [4Fe-4S] cluster. [Ni-4Fe-5S] cluster is required as a cofactor.

It carries out the reaction CO + 2 oxidized [2Fe-2S]-[ferredoxin] + H2O = 2 reduced [2Fe-2S]-[ferredoxin] + CO2 + 2 H(+). Functionally, CODH oxidizes carbon monoxide coupled, via CooF, to the reduction of a hydrogen cation by a hydrogenase (possibly CooH). The polypeptide is Carbon monoxide dehydrogenase (cooS) (Archaeoglobus fulgidus (strain ATCC 49558 / DSM 4304 / JCM 9628 / NBRC 100126 / VC-16)).